Reading from the N-terminus, the 274-residue chain is ATP synthase subunit a (274 aa).

5 helical membrane passes run 43 to 63 (TLNI…LYVF), 103 to 123 (VIAP…VMDL), 144 to 164 (VVPT…FVLI), 223 to 243 (LIFI…LSLP), and 245 to 265 (AIFH…LTIV).

This sequence belongs to the ATPase A chain family. In terms of assembly, F-type ATPases have 2 components, CF(1) - the catalytic core - and CF(0) - the membrane proton channel. CF(1) has five subunits: alpha(3), beta(3), gamma(1), delta(1), epsilon(1). CF(0) has three main subunits: a(1), b(2) and c(9-12). The alpha and beta chains form an alternating ring which encloses part of the gamma chain. CF(1) is attached to CF(0) by a central stalk formed by the gamma and epsilon chains, while a peripheral stalk is formed by the delta and b chains.

The protein localises to the cell inner membrane. Its function is as follows. Key component of the proton channel; it plays a direct role in the translocation of protons across the membrane. The chain is ATP synthase subunit a from Photorhabdus laumondii subsp. laumondii (strain DSM 15139 / CIP 105565 / TT01) (Photorhabdus luminescens subsp. laumondii).